The primary structure comprises 346 residues: Guanine nucleotide-binding protein subunit beta-2 (346 aa).

WD repeat units lie at residues glycine 57–valine 96, leucine 99–valine 138, glycine 147–aspartate 185, glycine 188–methionine 227, glycine 230–leucine 269, glutamine 274–methionine 313, and glycine 316–leucine 346.

The protein belongs to the WD repeat G protein beta family. G proteins are composed of 3 units, alpha, beta and gamma. Interacts with Ggammae/Guanine nucleotide-binding protein subunit gamma-e.

Its function is as follows. Guanine nucleotide-binding proteins (G proteins) are involved as modulators or transducers in various transmembrane signaling systems. The beta and gamma chains are required for the GTPase activity, for replacement of GDP by GTP, and for G protein-effector interaction. The polypeptide is Guanine nucleotide-binding protein subunit beta-2 (Calliphora vicina (Blue blowfly)).